The chain runs to 184 residues: dCTP deaminase (184 aa).

107-112 is a dCTP binding site; it reads KSTYAR. Glutamate 133 functions as the Proton donor/acceptor in the catalytic mechanism. 3 residues coordinate dCTP: glutamine 152, tyrosine 166, and glutamine 176.

The protein belongs to the dCTP deaminase family. As to quaternary structure, homotrimer.

The enzyme catalyses dCTP + H2O + H(+) = dUTP + NH4(+). It participates in pyrimidine metabolism; dUMP biosynthesis; dUMP from dCTP (dUTP route): step 1/2. Functionally, catalyzes the deamination of dCTP to dUTP. This chain is dCTP deaminase, found in Acidiphilium cryptum (strain JF-5).